The following is a 156-amino-acid chain: MGRFISVSFGLLVVFLSLSGTGADCPSDWSSFKQYCYQIIKQLKTWEDAERFCMDQVKGAHLVSIESYREAVFVAQQLSENVKTTKYDVWIGLSVVNKGQQCSSEWSDGSSVSYENLVKPLSKKCFVLKKGTEFRKWFNVACEQKHLFMCKFLRPR.

Residues 1–23 form the signal peptide; it reads MGRFISVSFGLLVVFLSLSGTGA. Disulfide bonds link Cys25/Cys36, Cys53/Cys150, and Cys125/Cys142. Positions 32-151 constitute a C-type lectin domain; the sequence is FKQYCYQIIK…CEQKHLFMCK (120 aa).

This sequence belongs to the snaclec family. As to quaternary structure, heteromultimer; disulfide-linked. Expressed by the venom gland.

The protein resides in the secreted. Functionally, interferes with one step of hemostasis (modulation of platelet aggregation, or coagulation cascade, for example). The sequence is that of Snaclec stejaggregin-B subunit alpha from Trimeresurus stejnegeri (Chinese green tree viper).